The sequence spans 248 residues: Mannose-binding protein C (248 aa).

The signal sequence occupies residues 1–20 (MSLFPSLPLLLLSMVAASYS). In terms of domain architecture, Collagen-like spans 42-99 (GINGFPGKDGRDGTKGEKGEPGQGLRGLQGPPGKLGPPGNPGPSGSPGAKGQKGDPGA). Positions 43-112 (INGFPGKDGR…CDSSLANPER (70 aa)) are disordered. Proline 47 carries the post-translational modification 4-hydroxyproline. A compositionally biased stretch (basic and acidic residues) spans 49–61 (KDGRDGTKGEKGE). 4-hydroxyproline occurs at positions 73, 79, 82, and 88. Residues 112-130 (RKTLQTEINRIKKWVTFSL) are a coiled coil. One can recognise a C-type lectin domain in the interval 134–245 (VGKKLFLTNG…CSSSHLVICE (112 aa)). 2 disulfide bridges follow: cysteine 155–cysteine 244 and cysteine 222–cysteine 236.

In terms of assembly, oligomeric complex of 3 or more homotrimers. Interacts with MASP1 and MASP2. Interacts with MEP1A and MEP1B and may inhibit their catalytic activity. In terms of processing, hydroxylation on proline residues within the sequence motif, GXPG, is most likely to be 4-hydroxy as this fits the requirement for 4-hydroxylation in vertebrates.

Its subcellular location is the secreted. Calcium-dependent lectin involved in innate immune defense. Binds mannose, fucose and N-acetylglucosamine on different microorganisms and activates the lectin complement pathway. Binds to late apoptotic cells, as well as to apoptotic blebs and to necrotic cells, but not to early apoptotic cells, facilitating their uptake by macrophages. This Callithrix jacchus (White-tufted-ear marmoset) protein is Mannose-binding protein C (MBL2).